The chain runs to 141 residues: Ribosomal RNA large subunit methyltransferase H (141 aa).

Glycine 88 contributes to the S-adenosyl-L-methionine binding site.

The protein belongs to the RNA methyltransferase RlmH family. In terms of assembly, homodimer.

The protein localises to the cytoplasm. The enzyme catalyses pseudouridine(1915) in 23S rRNA + S-adenosyl-L-methionine = N(3)-methylpseudouridine(1915) in 23S rRNA + S-adenosyl-L-homocysteine + H(+). Functionally, specifically methylates the pseudouridine at position 1915 (m3Psi1915) in 23S rRNA. This is Ribosomal RNA large subunit methyltransferase H from Novosphingobium aromaticivorans (strain ATCC 700278 / DSM 12444 / CCUG 56034 / CIP 105152 / NBRC 16084 / F199).